The primary structure comprises 197 residues: Protein GrpE (197 aa).

The segment at 1–39 (MSSKEQKTPEGQAPEEIIMDQHEEIEAVEPEASAEQVDP) is disordered.

This sequence belongs to the GrpE family. In terms of assembly, homodimer.

Its subcellular location is the cytoplasm. Functionally, participates actively in the response to hyperosmotic and heat shock by preventing the aggregation of stress-denatured proteins, in association with DnaK and GrpE. It is the nucleotide exchange factor for DnaK and may function as a thermosensor. Unfolded proteins bind initially to DnaJ; upon interaction with the DnaJ-bound protein, DnaK hydrolyzes its bound ATP, resulting in the formation of a stable complex. GrpE releases ADP from DnaK; ATP binding to DnaK triggers the release of the substrate protein, thus completing the reaction cycle. Several rounds of ATP-dependent interactions between DnaJ, DnaK and GrpE are required for fully efficient folding. This Escherichia coli O45:K1 (strain S88 / ExPEC) protein is Protein GrpE.